The following is a 364-amino-acid chain: Nucleoporin SEH1 (364 aa).

WD repeat units follow at residues 10-49 (DHKD…EWNC), 55-96 (THSG…SNDK), 111-152 (DSRT…NLSQ), 160-210 (SCKL…RKYA), 217-258 (TVTD…KESS), and 275-314 (GHNS…NWKC). The tract at residues 326 to 364 (NGAAGQAGTPGAAGTPGGPASQNALQAVAGRKKAQLMPG) is disordered. A compositionally biased stretch (low complexity) spans 327–338 (GAAGQAGTPGAA). The span at 355–364 (GRKKAQLMPG) shows a compositional bias: basic residues.

The protein belongs to the WD repeat SEC13 family. In terms of assembly, component of the Nup107-160 subcomplex of the nuclear pore complex (NPC). The Nup107-160 subcomplex includes NUP160, NUP133, NUP107, NUP98, NUP85, NUP43, NUP37, SEH1 and SEC13. Component of the GATOR2 subcomplex, composed of MIOS, SEC13, SEH1L, WDR24 and WDR59. The GATOR2 complex interacts with CASTOR1 and CASTOR2; the interaction is negatively regulated by arginine. The GATOR2 complex interacts with SESN1, SESN2 and SESN3; the interaction is negatively regulated by amino acids.

It localises to the chromosome. The protein localises to the centromere. Its subcellular location is the kinetochore. The protein resides in the nucleus. It is found in the nuclear pore complex. It localises to the lysosome membrane. Its activity is regulated as follows. The GATOR2 complex is negatively regulated by the upstream amino acid sensors CASTOR1 and SESN2, which sequester the GATOR2 complex in absence of amino acids. In the presence of abundant amino acids, GATOR2 is released from CASTOR1 and SESN2 and activated. Functionally, component of the Nup107-160 subcomplex of the nuclear pore complex (NPC). The Nup107-160 subcomplex is required for the assembly of a functional NPC. The Nup107-160 subcomplex is also required for normal kinetochore microtubule attachment, mitotic progression and chromosome segregation. This subunit plays a role in recruitment of the Nup107-160 subcomplex to the kinetochore. As a component of the GATOR2 complex, functions as an activator of the amino acid-sensing branch of the mTORC1 signaling pathway. The GATOR2 complex indirectly activates mTORC1 through the inhibition of the GATOR1 subcomplex. GATOR2 probably acts as an E3 ubiquitin-protein ligase toward GATOR1. In the presence of abundant amino acids, the GATOR2 complex mediates ubiquitination of the NPRL2 core component of the GATOR1 complex, leading to GATOR1 inactivation. In the absence of amino acids, GATOR2 is inhibited, activating the GATOR1 complex. The sequence is that of Nucleoporin SEH1 (seh1l) from Osmerus mordax (Rainbow smelt).